The following is a 77-amino-acid chain: Acyl carrier protein (77 aa).

Residues 1-76 form the Carrier domain; sequence MAVFDEVKDV…DVVNYIDGLK (76 aa). Ser-36 is subject to O-(pantetheine 4'-phosphoryl)serine.

It belongs to the acyl carrier protein (ACP) family. Post-translationally, 4'-phosphopantetheine is transferred from CoA to a specific serine of apo-ACP by AcpS. This modification is essential for activity because fatty acids are bound in thioester linkage to the sulfhydryl of the prosthetic group.

The protein localises to the cytoplasm. The protein operates within lipid metabolism; fatty acid biosynthesis. Functionally, carrier of the growing fatty acid chain in fatty acid biosynthesis. The polypeptide is Acyl carrier protein (Campylobacter fetus subsp. fetus (strain 82-40)).